The sequence spans 33 residues: Alpha-amanitin proprotein (33 aa).

Residues 1-10 constitute a propeptide that is removed on maturation; that stretch reads MSDINATRLP. (3R,4R)-4,5-dihydroxyisoleucine; in form alpha-amanitin is present on Ile-11. The residue at position 11 (Ile-11) is a (3R,4S)-4-hydroxyisoleucine; in form gamma-amanitin. The segment at residues 11–18 is a cross-link (cyclopeptide (Ile-Pro)); it reads IWGIGCNP. Positions 12–16 form a cross-link, 2'-cysteinyl-6'-hydroxytryptophan sulfoxide (Trp-Cys); that stretch reads WGIGC. Pro-18 is subject to 4-hydroxyproline. A propeptide spanning residues 19-33 is cleaved from the precursor; sequence SVGDEVTALLASGEA.

The protein belongs to the MSDIN fungal toxin family. Processed by the macrocyclase-peptidase enzyme POPB to yield a toxic cyclic decapeptide. POPB first removes 10 residues from the N-terminus. Conformational trapping of the remaining peptide forces the enzyme to release this intermediate rather than proceed to macrocyclization. The enzyme rebinds the remaining peptide in a different conformation and catalyzes macrocyclization of the N-terminal 8 residues.

Functionally, major toxin belonging to the bicyclic octapeptides amatoxins that acts by binding non-competitively to RNA polymerase II and greatly slowing the elongation of transcripts from target promoters. This Amanita rimosa protein is Alpha-amanitin proprotein.